We begin with the raw amino-acid sequence, 490 residues long: Probable glycine dehydrogenase (decarboxylating) subunit 2 (490 aa).

The residue at position 273 (lysine 273) is an N6-(pyridoxal phosphate)lysine.

This sequence belongs to the GcvP family. C-terminal subunit subfamily. In terms of assembly, the glycine cleavage system is composed of four proteins: P, T, L and H. In this organism, the P 'protein' is a heterodimer of two subunits. Pyridoxal 5'-phosphate is required as a cofactor.

The enzyme catalyses N(6)-[(R)-lipoyl]-L-lysyl-[glycine-cleavage complex H protein] + glycine + H(+) = N(6)-[(R)-S(8)-aminomethyldihydrolipoyl]-L-lysyl-[glycine-cleavage complex H protein] + CO2. The glycine cleavage system catalyzes the degradation of glycine. The P protein binds the alpha-amino group of glycine through its pyridoxal phosphate cofactor; CO(2) is released and the remaining methylamine moiety is then transferred to the lipoamide cofactor of the H protein. The chain is Probable glycine dehydrogenase (decarboxylating) subunit 2 from Staphylococcus aureus (strain Newman).